Consider the following 117-residue polypeptide: Small ribosomal subunit protein uS17 (117 aa).

A disordered region spans residues 1 to 42; it reads MMAEAKKAAPKKAATAASKDADAKGPKHTPPNPKVRGRRKTR.

Belongs to the universal ribosomal protein uS17 family. Part of the 30S ribosomal subunit.

One of the primary rRNA binding proteins, it binds specifically to the 5'-end of 16S ribosomal RNA. This Mycolicibacterium paratuberculosis (strain ATCC BAA-968 / K-10) (Mycobacterium paratuberculosis) protein is Small ribosomal subunit protein uS17.